The primary structure comprises 202 residues: Putative 3-methyladenine DNA glycosylase (202 aa).

It belongs to the DNA glycosylase MPG family.

This chain is Putative 3-methyladenine DNA glycosylase, found in Staphylococcus aureus (strain bovine RF122 / ET3-1).